A 1176-amino-acid chain; its full sequence is Leucine--tRNA ligase, cytoplasmic (1176 aa).

Residues tyrosine 52 and tyrosine 54 each coordinate L-leucine. A 'HIGH' region motif is present at residues 60 to 63 (HLGH). The residue at position 167 (serine 167) is a Phosphoserine. Residues 260–509 (GPQEYTLLKL…DAGDALIYME (250 aa)) are editing domain. Positions 594 and 597 each coordinate L-leucine. The 'KMSKS' region signature appears at 716–720 (KMSKS). Lysine 719 is a binding site for ATP. A Phosphoserine modification is found at serine 720. Lysine 970 and lysine 1047 each carry N6-acetyllysine.

It belongs to the class-I aminoacyl-tRNA synthetase family. As to quaternary structure, part of the aminoacyl-tRNA synthetase multienzyme complex, also known as multisynthetase complex (MSC), that is composed of the aminoacyl-tRNA ligases for Arg (RARS1), Asp (DARS1), Gln (QARS1), Ile (IARS1), Leu (LARS1), Lys (KARS1), Met (MARS1) the bifunctional ligase for Glu and Pro (EPRS1) and the auxiliary subunits AIMP1/p43, AIMP2/p38 and EEF1E1/p18.

It is found in the cytoplasm. The catalysed reaction is tRNA(Leu) + L-leucine + ATP = L-leucyl-tRNA(Leu) + AMP + diphosphate. It catalyses the reaction L-methionyl-tRNA(Leu) + H2O = tRNA(Leu) + L-methionine + H(+). 5-fluoro-1,3-dihydro-1-hydroxy-1,2-benzoxaborole inhibits LARS1 by forming a covalent adduct with the 3' adenosine of tRNA(Leu) at the editing site, thus locking the enzyme in an inactive conformation. Functionally, aminoacyl-tRNA synthetase that catalyzes the specific attachment of leucine to its cognate tRNA (tRNA(Leu)). It performs tRNA aminoacylation in a two-step reaction: Leu is initially activated by ATP to form a leucyl-adenylate (Leu-AMP) intermediate; then the leucyl moiety is transferred to the acceptor 3' end of the tRNA to yield leucyl-tRNA. To improve the fidelity of catalytic reactions, it is also able to hydrolyze misactivated aminoacyl-adenylate intermediates (pre-transfer editing) and mischarged aminoacyl-tRNAs (post-transfer editing). This chain is Leucine--tRNA ligase, cytoplasmic, found in Homo sapiens (Human).